The chain runs to 450 residues: Dol-P-Glc:Glc(2)Man(9)GlcNAc(2)-PP-Dol alpha-1,2-glucosyltransferase (450 aa).

Residues 12–32 (ISIISKYVAIVIFLIFVIIMF) traverse the membrane as a helical segment. N-linked (GlcNAc...) asparagine glycosylation is present at asparagine 34. Helical transmembrane passes span 158–178 (YFLFYTDVSSTILIILSLGLI), 190–210 (ALVGFMSLWFRQTNIIWIAFI), 243–263 (LLGYIVNIILFVIFLKLNGGI), and 273–293 (IELHIVQVFYCFTFITFFTIP). N-linked (GlcNAc...) asparagine glycosylation is present at asparagine 297. A run of 4 helical transmembrane segments spans residues 312-332 (IILNLVIGLIIWYIMENFTIV), 357-377 (LKPLILMAYHFSSFQIISSLI), 384-404 (FIGIFSYLIAVGLTLIPSPLF), and 429-449 (FIWLNSINLITSYIFLHKGII).

The protein belongs to the ALG10 glucosyltransferase family.

The protein resides in the endoplasmic reticulum membrane. The catalysed reaction is an alpha-D-Glc-(1-&gt;3)-alpha-D-Glc-(1-&gt;3)-alpha-D-Man-(1-&gt;2)-alpha-D-Man-(1-&gt;2)-alpha-D-Man-(1-&gt;3)-[alpha-D-Man-(1-&gt;2)-alpha-D-Man-(1-&gt;3)-[alpha-D-Man-(1-&gt;2)-alpha-D-Man-(1-&gt;6)]-alpha-D-Man-(1-&gt;6)]-beta-D-Man-(1-&gt;4)-beta-D-GlcNAc-(1-&gt;4)-alpha-D-GlcNAc-diphospho-di-trans,poly-cis-dolichol + a di-trans,poly-cis-dolichyl beta-D-glucosyl phosphate = a alpha-D-Glc-(1-&gt;2)-alpha-D-Glc-(1-&gt;3)-alpha-D-Glc-(1-&gt;3)-alpha-D-Man-(1-&gt;2)-alpha-D-Man-(1-&gt;2)-alpha-D-Man-(1-&gt;3)-[alpha-D-Man-(1-&gt;2)-alpha-D-Man-(1-&gt;3)-[alpha-D-Man-(1-&gt;2)-alpha-D-Man-(1-&gt;6)]-alpha-D-Man-(1-&gt;6)]-beta-D-Man-(1-&gt;4)-beta-D-GlcNAc-(1-&gt;4)-alpha-D-GlcNAc-diphospho-di-trans,poly-cis-dolichol + a di-trans,poly-cis-dolichyl phosphate + H(+). It participates in protein modification; protein glycosylation. In terms of biological role, dol-P-Glc:Glc(2)Man(9)GlcNAc(2)-PP-Dol alpha-1,2-glucosyltransferase that operates in the biosynthetic pathway of dolichol-linked oligosaccharides, the glycan precursors employed in protein asparagine (N)-glycosylation. The assembly of dolichol-linked oligosaccharides begins on the cytosolic side of the endoplasmic reticulum membrane and finishes in its lumen. The sequential addition of sugars to dolichol pyrophosphate produces dolichol-linked oligosaccharides containing fourteen sugars, including two GlcNAcs, nine mannoses and three glucoses. Once assembled, the oligosaccharide is transferred from the lipid to nascent proteins by oligosaccharyltransferases. In the lumen of the endoplasmic reticulum, adds the third and last glucose residue from dolichyl phosphate glucose (Dol-P-Glc) onto the lipid-linked oligosaccharide intermediate Glc(2)Man(9)GlcNAc(2)-PP-Dol to produce Glc(3)Man(9)GlcNAc(2)-PP-Dol. This chain is Dol-P-Glc:Glc(2)Man(9)GlcNAc(2)-PP-Dol alpha-1,2-glucosyltransferase (DIE2), found in Candida albicans (strain SC5314 / ATCC MYA-2876) (Yeast).